The primary structure comprises 510 residues: Glutamyl-tRNA(Gln) amidotransferase subunit A (510 aa).

Active-site charge relay system residues include K82 and S157. S181 functions as the Acyl-ester intermediate in the catalytic mechanism.

This sequence belongs to the amidase family. GatA subfamily. Heterotrimer of A, B and C subunits.

It catalyses the reaction L-glutamyl-tRNA(Gln) + L-glutamine + ATP + H2O = L-glutaminyl-tRNA(Gln) + L-glutamate + ADP + phosphate + H(+). Functionally, allows the formation of correctly charged Gln-tRNA(Gln) through the transamidation of misacylated Glu-tRNA(Gln) in organisms which lack glutaminyl-tRNA synthetase. The reaction takes place in the presence of glutamine and ATP through an activated gamma-phospho-Glu-tRNA(Gln). In Bordetella avium (strain 197N), this protein is Glutamyl-tRNA(Gln) amidotransferase subunit A.